A 616-amino-acid chain; its full sequence is Probable Xaa-Pro aminopeptidase P (616 aa).

Positions 413, 424, 522, and 536 each coordinate Mn(2+).

It belongs to the peptidase M24B family. Requires Mn(2+) as cofactor.

The catalysed reaction is Release of any N-terminal amino acid, including proline, that is linked to proline, even from a dipeptide or tripeptide.. Catalyzes the removal of a penultimate prolyl residue from the N-termini of peptides. In Paracoccidioides brasiliensis (strain Pb18), this protein is Probable Xaa-Pro aminopeptidase P (AMPP).